The primary structure comprises 844 residues: Translation initiation factor IF-2 (844 aa).

Positions 1–11 (MTEDVKADVPK) are enriched in basic and acidic residues. 2 disordered regions span residues 1–35 (MTEDVKADVPKKLSIQRRTKTTVSGTTTSGKSKAV) and 79–248 (RLEA…KGAA). Residues 21-33 (TTVSGTTTSGKSK) are compositionally biased toward low complexity. Residues 79 to 161 (RLEAEKAATK…AAEEAKRYAE (83 aa)) show a composition bias toward basic and acidic residues. Over residues 162-175 (ADDSDNESSSEDYS) the composition is skewed to acidic residues. The span at 200–210 (RGKNKVAKAKK) shows a compositional bias: basic residues. The segment covering 211 to 237 (GGRDDENSKNSKNERESNRKNQKDAKF) has biased composition (basic and acidic residues). Residues 343 to 513 (TRAPVVTIMG…LLQSEVLELT (171 aa)) form the tr-type G domain. Residues 352 to 359 (GHVDHGKT) are G1. 352–359 (GHVDHGKT) contacts GTP. Residues 377-381 (GITQH) are G2. The tract at residues 399–402 (DTPG) is G3. GTP contacts are provided by residues 399-403 (DTPGH) and 453-456 (NKID). Residues 453-456 (NKID) form a G4 region. The G5 stretch occupies residues 489–491 (SAK).

The protein belongs to the TRAFAC class translation factor GTPase superfamily. Classic translation factor GTPase family. IF-2 subfamily.

The protein localises to the cytoplasm. Its function is as follows. One of the essential components for the initiation of protein synthesis. Protects formylmethionyl-tRNA from spontaneous hydrolysis and promotes its binding to the 30S ribosomal subunits. Also involved in the hydrolysis of GTP during the formation of the 70S ribosomal complex. The chain is Translation initiation factor IF-2 from Haemophilus influenzae (strain PittGG).